The sequence spans 436 residues: MKVKTITRGTSLTRLNDQDPVKRNLDPSLHPFERAREYTRALNATKMDRMFAAPFLGQLGRGHQDGVYSLARDTKTLIDCASGSGDGAVKLWDASERCERWTSKAHEGIVRGLVFSNQGDVLSCASDRYVYMLNKQDGKVKRSYLGDSSLLDIDTSKGGDLFATSGENVSIWDYSRDTPVTKFEWGADTLPVVKFNYTETSVLASAGMDRSIVIYDLRTSSPLTKLITKLRTNSISWNPMEAFNFVAGSEDHNLYMYDMRNLKRALHVYKDHVSAVMSVDFSPTGQEFVSGSYDKTIRIYNVREGHSRDVYHTKRMQRVTAVKFSMDAQYIFSGSDDSNVRLWRARASSRASIRSTREENRLKYLDSLRERYKHIPEIRRIARHRHLPTNVKKAAEIKREEINSLKRREENIRRHSKKGAVPYEKERERHVVGIQK.

WD repeat units lie at residues 62-102 (GHQD…ERWT), 105-143 (AHEG…VKRS), 145-175 (LGDS…WDYS), 176-225 (RDTP…PLTK), 227-267 (ITKL…RALH), 271-310 (DHVS…SRDV), and 314-353 (KRMQ…RASI). Residues 411-436 (NIRRHSKKGAVPYEKERERHVVGIQK) form a disordered region. The segment covering 423–436 (YEKERERHVVGIQK) has biased composition (basic and acidic residues).

The protein belongs to the WD repeat DCAF13/WDSOF1 family. As to quaternary structure, interacts with snoRNA U3. Component of the ribosomal small subunit (SSU) processome composed of at least 40 protein subunits and snoRNA U3.

Its subcellular location is the nucleus. The protein localises to the nucleolus. It is found in the cytoplasm. It localises to the cytoskeleton. The protein resides in the spindle. Functionally, required for ribosomal RNA processing. The chain is Protein sof1 (sof1) from Schizosaccharomyces pombe (strain 972 / ATCC 24843) (Fission yeast).